The sequence spans 1396 residues: DNA-directed RNA polymerase subunit beta' (1396 aa).

Residues Cys71, Cys73, Cys86, and Cys89 each coordinate Zn(2+). Residues Asp462, Asp464, and Asp466 each contribute to the Mg(2+) site. Positions 810, 884, 891, and 894 each coordinate Zn(2+). The span at 1372–1382 shows a compositional bias: basic and acidic residues; that stretch reads DEQLAQQREDA. The disordered stretch occupies residues 1372–1396; the sequence is DEQLAQQREDAMEPLPAEIALSDAE.

It belongs to the RNA polymerase beta' chain family. In terms of assembly, the RNAP catalytic core consists of 2 alpha, 1 beta, 1 beta' and 1 omega subunit. When a sigma factor is associated with the core the holoenzyme is formed, which can initiate transcription. It depends on Mg(2+) as a cofactor. Zn(2+) serves as cofactor.

The enzyme catalyses RNA(n) + a ribonucleoside 5'-triphosphate = RNA(n+1) + diphosphate. Its function is as follows. DNA-dependent RNA polymerase catalyzes the transcription of DNA into RNA using the four ribonucleoside triphosphates as substrates. In Caulobacter vibrioides (strain ATCC 19089 / CIP 103742 / CB 15) (Caulobacter crescentus), this protein is DNA-directed RNA polymerase subunit beta'.